A 106-amino-acid polypeptide reads, in one-letter code: Iron-sulfur cluster assembly protein CyaY (106 aa).

Belongs to the frataxin family.

In terms of biological role, involved in iron-sulfur (Fe-S) cluster assembly. May act as a regulator of Fe-S biogenesis. In Escherichia coli O139:H28 (strain E24377A / ETEC), this protein is Iron-sulfur cluster assembly protein CyaY.